A 375-amino-acid chain; its full sequence is 4-hydroxy-3-methylbut-2-en-1-yl diphosphate synthase (flavodoxin) (375 aa).

[4Fe-4S] cluster-binding residues include cysteine 268, cysteine 271, cysteine 303, and glutamate 310.

It belongs to the IspG family. Requires [4Fe-4S] cluster as cofactor.

The catalysed reaction is (2E)-4-hydroxy-3-methylbut-2-enyl diphosphate + oxidized [flavodoxin] + H2O + 2 H(+) = 2-C-methyl-D-erythritol 2,4-cyclic diphosphate + reduced [flavodoxin]. It participates in isoprenoid biosynthesis; isopentenyl diphosphate biosynthesis via DXP pathway; isopentenyl diphosphate from 1-deoxy-D-xylulose 5-phosphate: step 5/6. Converts 2C-methyl-D-erythritol 2,4-cyclodiphosphate (ME-2,4cPP) into 1-hydroxy-2-methyl-2-(E)-butenyl 4-diphosphate. This is 4-hydroxy-3-methylbut-2-en-1-yl diphosphate synthase (flavodoxin) from Bacillus velezensis (strain DSM 23117 / BGSC 10A6 / LMG 26770 / FZB42) (Bacillus amyloliquefaciens subsp. plantarum).